We begin with the raw amino-acid sequence, 491 residues long: Protein nucleotidyltransferase YdiU (491 aa).

Gly94, Gly96, Arg97, Lys117, Asp129, Gly130, Arg180, and Arg187 together coordinate ATP. Asp256 acts as the Proton acceptor in catalysis. The Mg(2+) site is built by Asn257 and Asp266. Asp266 is an ATP binding site.

The protein belongs to the SELO family. Requires Mg(2+) as cofactor. It depends on Mn(2+) as a cofactor.

The catalysed reaction is L-seryl-[protein] + ATP = 3-O-(5'-adenylyl)-L-seryl-[protein] + diphosphate. The enzyme catalyses L-threonyl-[protein] + ATP = 3-O-(5'-adenylyl)-L-threonyl-[protein] + diphosphate. It catalyses the reaction L-tyrosyl-[protein] + ATP = O-(5'-adenylyl)-L-tyrosyl-[protein] + diphosphate. It carries out the reaction L-histidyl-[protein] + UTP = N(tele)-(5'-uridylyl)-L-histidyl-[protein] + diphosphate. The catalysed reaction is L-seryl-[protein] + UTP = O-(5'-uridylyl)-L-seryl-[protein] + diphosphate. The enzyme catalyses L-tyrosyl-[protein] + UTP = O-(5'-uridylyl)-L-tyrosyl-[protein] + diphosphate. In terms of biological role, nucleotidyltransferase involved in the post-translational modification of proteins. It can catalyze the addition of adenosine monophosphate (AMP) or uridine monophosphate (UMP) to a protein, resulting in modifications known as AMPylation and UMPylation. This is Protein nucleotidyltransferase YdiU from Clostridium botulinum (strain Okra / Type B1).